The primary structure comprises 56 residues: Large ribosomal subunit protein uL30 (56 aa).

It belongs to the universal ribosomal protein uL30 family. Part of the 50S ribosomal subunit.

In Nitratidesulfovibrio vulgaris (strain DSM 19637 / Miyazaki F) (Desulfovibrio vulgaris), this protein is Large ribosomal subunit protein uL30.